Reading from the N-terminus, the 274-residue chain is Oxidoreductase stcQ (274 aa).

This sequence belongs to the avfA family.

It functions in the pathway mycotoxin biosynthesis; sterigmatocystin biosynthesis. Functionally, oxidoreductase; part of the gene cluster that mediates the biosynthesis of sterigmatocystin (ST), a polyketide-derived furanocoumarin which is part of the most toxic and carcinogenic compounds among the known mycotoxins. The first step in the biosynthesis of sterigmatocystin is the production of hexanoate by the fatty acid synthase (FAS) units stcJ and stcK. The polyketide backbone is assembled by the non-reducing polyketide synthase stcA by condensation of the starter hexanoyl-CoA and 7 malonyl-CoA extender units followed by cyclization and release of norsolorinic acid. Norsolorinic acid is the first stable intermediate in the biosynthesis of sterigmatocystin and is converted into averantin (AVN) by the ketoreductase stcE which reduces the hexanoate ketone to an alcohol. Averantin is then oxidized into 5'-hydroxyaverantin (HAVN) by the cytochrome P450 monooxygenase stcF. 5'-hydroxyaverantin is further converted to 5'-oxyaverantin (OAVN) by the 5'-hydroxyaverantin dehydrogenase stcG. The next step is the conversion of OAVN into averufin (AVF) which is catalyzed by a yet to be identified enzyme. The cytochrome P450 monooxygenase stcB and the flavin-binding monooxygenase stcW are both required for the conversion of averufin to 1-hydroxyversicolorone. The esterase stcI probably catalyzes the formation of versiconal hemiacetal acetate from 1-hydroxyversicolorone. The oxydoreductase stcN then probably catalyzes the biosynthetic step from versiconal to versicolorin B (VERB). The next step is performed by the versicolorin B desaturase stcL to produce versicolorin A (VERA). The ketoreductase stcU and the cytochrome P450 monooxygenase stcS are involved in the conversion of versicolorin A to demethylsterigmatocystin. The Baeyer-Villiger oxidas stcQ and the reductase stcR might be involved in the biosynthetic step from versicolorin A to demethylsterigmatocystin. The final step in the biosynthesis of sterigmatocystin is the methylation of demethylsterigmatocystin catalyzed by the methyltransferase stcP. This chain is Oxidoreductase stcQ, found in Emericella nidulans (strain FGSC A4 / ATCC 38163 / CBS 112.46 / NRRL 194 / M139) (Aspergillus nidulans).